Reading from the N-terminus, the 736-residue chain is MGGNVMTDDKMNSVTSGANKQETGRDMSNRDWWPNHLKLEILHQHSSKSNPMGEDFNYAKEFKSLDLAAVKKDLAALMTDSQDWWPADFGHYGPLFIRMAWHSAGTYRAGDGRGGGGRGQQRFAPLNSWPDNVNLDKARRLLWPIKQKYGRKISWADLMILTGNVAMETMGFKTFGFGGGREDVWEPDQDVYWGSEDTWLGDERYTGDRDLENPLAAVQMGLIYVNPEGPNGNPDPIAAAKDIREVFARMAMNDEETVALIAGGHAFGKTHGAGPASHVGPEPEAASIEAQGLGWKSSFGTGKGDDTITGGLEVTWTNTPTKWSNNFFRILFGYEWELTKSPAGAYQWKPKGGAGAGTIPDAHDPSKRHAPSMMTTDLSLRFDPVYEKISRHFYENPGQLADSFARAWFKLTHRDMGPRARYLGPEVPAEELIWQDPIPAVNHELIDEKDIAFLKDRILASGLSISQLVSTAWVSASTFRGSDKRGGANGARIRLAPQKDWEVNQPAELAKVLNTLEGIQSEFNSAASGGKKVSLADLIVLAGCAGVEQAAKNAGYDVTVPFLPGRMDALQEQTDVVSFALLEPIADGFRNYLKAQYPLPAEELLVDKAQLLTLTAPEMTVLVGGMRVLNTNFGHTQHGVFTQKPEALTNDFFVNLLDMGTEWKAVSDVKDIFEGCDRKTGEVKWTGTRVDLIFGSNSQLRALAEVYGSADAQEKFVQDFVAAWTKVMNLDRFDLA.

A disordered region spans residues 1–30 (MGGNVMTDDKMNSVTSGANKQETGRDMSNR). The segment covering 12-21 (NSVTSGANKQ) has biased composition (polar residues). Residues 101 to 224 (WHSAGTYRAG…LAAVQMGLIY (124 aa)) constitute a cross-link (tryptophyl-tyrosyl-methioninium (Trp-Tyr) (with M-250)). Histidine 102 acts as the Proton acceptor in catalysis. Positions 224–250 (YVNPEGPNGNPDPIAAAKDIREVFARM) form a cross-link, tryptophyl-tyrosyl-methioninium (Tyr-Met) (with W-101). A heme b-binding site is contributed by histidine 265. Positions 351-373 (KGGAGAGTIPDAHDPSKRHAPSM) are disordered.

The protein belongs to the peroxidase family. Peroxidase/catalase subfamily. In terms of assembly, homodimer or homotetramer. Requires heme b as cofactor. Formation of the three residue Trp-Tyr-Met cross-link is important for the catalase, but not the peroxidase activity of the enzyme.

The catalysed reaction is H2O2 + AH2 = A + 2 H2O. It catalyses the reaction 2 H2O2 = O2 + 2 H2O. Its function is as follows. Bifunctional enzyme with both catalase and broad-spectrum peroxidase activity. This is Catalase-peroxidase from Methanosarcina acetivorans (strain ATCC 35395 / DSM 2834 / JCM 12185 / C2A).